Consider the following 469-residue polypeptide: 3-isopropylmalate dehydratase large subunit (469 aa).

[4Fe-4S] cluster contacts are provided by cysteine 350, cysteine 410, and cysteine 413.

The protein belongs to the aconitase/IPM isomerase family. LeuC type 1 subfamily. In terms of assembly, heterodimer of LeuC and LeuD. It depends on [4Fe-4S] cluster as a cofactor.

It carries out the reaction (2R,3S)-3-isopropylmalate = (2S)-2-isopropylmalate. It functions in the pathway amino-acid biosynthesis; L-leucine biosynthesis; L-leucine from 3-methyl-2-oxobutanoate: step 2/4. In terms of biological role, catalyzes the isomerization between 2-isopropylmalate and 3-isopropylmalate, via the formation of 2-isopropylmaleate. This chain is 3-isopropylmalate dehydratase large subunit, found in Rhizobium rhizogenes (strain K84 / ATCC BAA-868) (Agrobacterium radiobacter).